The sequence spans 329 residues: Peroxidase 30 (329 aa).

Positions 1–27 are cleaved as a signal peptide; sequence MKTMTQLNIAVVVVVTVLIGMLRSSEA. Cystine bridges form between Cys-38–Cys-116, Cys-71–Cys-76, Cys-122–Cys-324, and Cys-201–Cys-234. His-69 (proton acceptor) is an active-site residue. The Ca(2+) site is built by Asp-70, Val-73, Gly-75, Asp-77, and Ser-79. N-linked (GlcNAc...) asparagine glycans are attached at residues Asn-83 and Asn-155. The interval 141 to 165 is disordered; that stretch reads SWSVPTGRRDGRISNKTEATNNIPP. Positions 156–165 are enriched in polar residues; that stretch reads KTEATNNIPP. Pro-164 provides a ligand contact to substrate. An N-linked (GlcNAc...) asparagine glycan is attached at Asn-169. His-194 serves as a coordination point for heme b. A Ca(2+)-binding site is contributed by Thr-195. N-linked (GlcNAc...) asparagine glycosylation is found at Asn-210 and Asn-240. The Ca(2+) site is built by Asp-247, Ser-250, and Asp-255. N-linked (GlcNAc...) asparagine glycosylation occurs at Asn-290.

The protein belongs to the peroxidase family. Classical plant (class III) peroxidase subfamily. It depends on heme b as a cofactor. Requires Ca(2+) as cofactor. Mainly expressed in roots.

The protein resides in the secreted. It carries out the reaction 2 a phenolic donor + H2O2 = 2 a phenolic radical donor + 2 H2O. Its function is as follows. Removal of H(2)O(2), oxidation of toxic reductants, biosynthesis and degradation of lignin, suberization, auxin catabolism, response to environmental stresses such as wounding, pathogen attack and oxidative stress. These functions might be dependent on each isozyme/isoform in each plant tissue. The polypeptide is Peroxidase 30 (PER30) (Arabidopsis thaliana (Mouse-ear cress)).